A 279-amino-acid polypeptide reads, in one-letter code: Small ribosomal subunit protein uS2 (279 aa).

Composition is skewed to acidic residues over residues 1 to 18 (MTEN…DEAV), 28 to 42 (TATE…DESN), and 65 to 81 (ADAE…FDED). The disordered stretch occupies residues 1–81 (MTENDNEVVE…ELEGPTFDED (81 aa)).

This sequence belongs to the universal ribosomal protein uS2 family.

The protein is Small ribosomal subunit protein uS2 of Haloquadratum walsbyi (strain DSM 16790 / HBSQ001).